Consider the following 367-residue polypeptide: Diphthine methyltransferase homolog (367 aa).

WD repeat units lie at residues 84-124, 132-173, 180-220, and 234-274; these read NFNS…KKLE, SLSN…SKVT, AHDY…NHND, and RCDM…QPII.

This sequence belongs to the DPH7 family.

The catalysed reaction is diphthine methyl ester-[translation elongation factor 2] + H2O = diphthine-[translation elongation factor 2] + methanol + H(+). The protein operates within protein modification; peptidyl-diphthamide biosynthesis. In terms of biological role, catalyzes the demethylation of diphthine methyl ester to form diphthine, an intermediate diphthamide biosynthesis, a post-translational modification of histidine which occurs in translation elongation factor 2 (efbA). The polypeptide is Diphthine methyltransferase homolog (wdr85) (Dictyostelium discoideum (Social amoeba)).